The primary structure comprises 148 residues: Single-stranded DNA-binding protein 1-B, mitochondrial (148 aa).

The N-terminal 17 residues, 1–17 (MFHRPVLQVFRQFARCQ), are a transit peptide targeting the mitochondrion. In terms of domain architecture, SSB spans 30-142 (MNKVQLLGRV…IIADNIIFLT (113 aa)).

Homotetramer.

The protein localises to the mitochondrion. It is found in the mitochondrion matrix. The protein resides in the mitochondrion nucleoid. Its function is as follows. Binds preferentially and cooperatively to pyrimidine rich single-stranded DNA (ss-DNA). Required to maintain the copy number of mitochondrial DNA (mtDNA) and plays crucial roles during mtDNA replication that stimulate activity of the DNA polymerase at the replication fork. May also function in mtDNA repair. This chain is Single-stranded DNA-binding protein 1-B, mitochondrial (ssbp1-b), found in Xenopus laevis (African clawed frog).